The following is a 127-amino-acid chain: Egg cell-secreted protein 1.4 (127 aa).

A signal peptide spans Met1–Gly25.

The protein belongs to the plant egg cell-secreted peptide family. In terms of tissue distribution, restricted to female reproductive tissues, specifically accumulating in storage vesicles of the unfertilized egg cell.

The protein localises to the cytoplasmic vesicle. Its subcellular location is the secreted. In terms of biological role, involved in the regulation of gamete interactions during the double fertilization and to prevent multiple-pollen tube attraction; mediates the redistribution of the gamete fusogen HAP2/GCS1 to the cell surface after secretion upon sperm arrival. This chain is Egg cell-secreted protein 1.4 (EC1.4), found in Arabidopsis thaliana (Mouse-ear cress).